Here is a 349-residue protein sequence, read N- to C-terminus: Anthranilate phosphoribosyltransferase (349 aa).

Residues G82, 85 to 86, 92 to 95, 110 to 118, and S122 contribute to the 5-phospho-alpha-D-ribose 1-diphosphate site; these read GD, NVST, and KHGNRAVSG. Residue G82 participates in anthranilate binding. Residue S94 participates in Mg(2+) binding. Residue N113 participates in anthranilate binding. Anthranilate is bound at residue R168. The Mg(2+) site is built by D227 and E228.

It belongs to the anthranilate phosphoribosyltransferase family. Homodimer. Requires Mg(2+) as cofactor.

It catalyses the reaction N-(5-phospho-beta-D-ribosyl)anthranilate + diphosphate = 5-phospho-alpha-D-ribose 1-diphosphate + anthranilate. It functions in the pathway amino-acid biosynthesis; L-tryptophan biosynthesis; L-tryptophan from chorismate: step 2/5. In terms of biological role, catalyzes the transfer of the phosphoribosyl group of 5-phosphorylribose-1-pyrophosphate (PRPP) to anthranilate to yield N-(5'-phosphoribosyl)-anthranilate (PRA). This is Anthranilate phosphoribosyltransferase from Pseudomonas fluorescens (strain ATCC BAA-477 / NRRL B-23932 / Pf-5).